A 460-amino-acid polypeptide reads, in one-letter code: Proline--tRNA ligase (460 aa).

Belongs to the class-II aminoacyl-tRNA synthetase family. ProS type 3 subfamily. In terms of assembly, homodimer.

The protein resides in the cytoplasm. The catalysed reaction is tRNA(Pro) + L-proline + ATP = L-prolyl-tRNA(Pro) + AMP + diphosphate. Functionally, catalyzes the attachment of proline to tRNA(Pro) in a two-step reaction: proline is first activated by ATP to form Pro-AMP and then transferred to the acceptor end of tRNA(Pro). This is Proline--tRNA ligase from Methanococcus maripaludis (strain C7 / ATCC BAA-1331).